Reading from the N-terminus, the 389-residue chain is Tubulin-like protein CetZ3 (389 aa).

Residues 10–14 (QAGGK), 110–112 (GTG), Glu-142, Asn-169, and Asn-187 contribute to the GTP site.

This sequence belongs to the CetZ family.

The protein localises to the cytoplasm. Functionally, involved in cell shape control. The sequence is that of Tubulin-like protein CetZ3 from Haloferax volcanii (strain ATCC 29605 / DSM 3757 / JCM 8879 / NBRC 14742 / NCIMB 2012 / VKM B-1768 / DS2) (Halobacterium volcanii).